The chain runs to 265 residues: Small ribosomal subunit protein uS2 (265 aa).

Residues 231–265 (VEEEYEDYEGSEEDYDYDETEYADSVIPEDGEEAE) form a disordered region.

This sequence belongs to the universal ribosomal protein uS2 family.

The polypeptide is Small ribosomal subunit protein uS2 (Nostoc sp. (strain PCC 7120 / SAG 25.82 / UTEX 2576)).